Consider the following 188-residue polypeptide: Acireductone dioxygenase (188 aa).

His97, His99, Glu103, and His141 together coordinate Fe(2+). Positions 97, 99, 103, and 141 each coordinate Ni(2+).

It belongs to the acireductone dioxygenase (ARD) family. In terms of assembly, monomer. Fe(2+) serves as cofactor. It depends on Ni(2+) as a cofactor.

It catalyses the reaction 1,2-dihydroxy-5-(methylsulfanyl)pent-1-en-3-one + O2 = 3-(methylsulfanyl)propanoate + CO + formate + 2 H(+). The catalysed reaction is 1,2-dihydroxy-5-(methylsulfanyl)pent-1-en-3-one + O2 = 4-methylsulfanyl-2-oxobutanoate + formate + 2 H(+). The protein operates within amino-acid biosynthesis; L-methionine biosynthesis via salvage pathway; L-methionine from S-methyl-5-thio-alpha-D-ribose 1-phosphate: step 5/6. Catalyzes 2 different reactions between oxygen and the acireductone 1,2-dihydroxy-3-keto-5-methylthiopentene (DHK-MTPene) depending upon the metal bound in the active site. Fe-containing acireductone dioxygenase (Fe-ARD) produces formate and 2-keto-4-methylthiobutyrate (KMTB), the alpha-ketoacid precursor of methionine in the methionine recycle pathway. Ni-containing acireductone dioxygenase (Ni-ARD) produces methylthiopropionate, carbon monoxide and formate, and does not lie on the methionine recycle pathway. The sequence is that of Acireductone dioxygenase from Gluconobacter oxydans (strain 621H) (Gluconobacter suboxydans).